Here is a 691-residue protein sequence, read N- to C-terminus: MDTSCVSINQCGFCTYLFNRSIPLAGEGDGAIMFNTMVDSMALGYIFSALYLLFRLQRSYTYLQKSSNNNNGNGNGNGSSNNDIISINSSNGLNRSGVKISQDTLWDKNFGISIDHPRIINSTYFKYTLFVSLWLAFEGLLLLFLPPNSLAYPAFVIIVGTGHIVTDNWVLVFLYGKEDDRFSARRSFYSCTLLYLIICCTTLASFFDDQTMCKKNDCQTFMFQDEYTSLAITVASLVVYTIVLGMTIKRSFLRPTGRIWLLFLMGYNCISSVGALLNILDVDAGYCFLGIAAIIYSFSYGPLLFRTCGNDTNLLRARGEFLPLLTNFQEYTSLFGRESISTSGEGATTALQLSAFYIRFNEFKFGQVIGEGYFGEVRKAVWKGAVVAVKILHRNSFRNTDGNKEENVFLKEVAILSILRHPNVLQFLGVCSETNLNGIVTEYMGGGSLDRLLTDRYFLIKQNPILAWNMAISIARGMFYLHDWKPNPILHRDLSTKNILLDESLTIAKVADFGLSKEQGFEMTSTVGHLCYQAPEVFIGELYTPKADVYSFGLLVWCIITGEQPNQNLQPLKMAHLAAYENYRPPMPQPMDPMWENLGKLIEMCWKKSPEERPSFSFILDFLEANVPISNTYVPPLKCISDNSVSNNFNNNNNTLNNGSTNNLGLLTLSFSTLNLQKQGGGAEEFHYIDG.

Residues 1-33 (MDTSCVSINQCGFCTYLFNRSIPLAGEGDGAIM) lie on the Extracellular side of the membrane. The helical transmembrane segment at 34 to 54 (FNTMVDSMALGYIFSALYLLF) threads the bilayer. Residues 55–126 (RLQRSYTYLQ…PRIINSTYFK (72 aa)) lie on the Cytoplasmic side of the membrane. The chain crosses the membrane as a helical span at residues 127–144 (YTLFVSLWLAFEGLLLLF). Over 145–153 (LPPNSLAYP) the chain is Extracellular. Residues 154–176 (AFVIIVGTGHIVTDNWVLVFLYG) traverse the membrane as a helical segment. Residues 177-186 (KEDDRFSARR) are Cytoplasmic-facing. A helical transmembrane segment spans residues 187–207 (SFYSCTLLYLIICCTTLASFF). Over 208–227 (DDQTMCKKNDCQTFMFQDEY) the chain is Extracellular. Residues 228–248 (TSLAITVASLVVYTIVLGMTI) form a helical membrane-spanning segment. The Cytoplasmic segment spans residues 249 to 258 (KRSFLRPTGR). Residues 259–279 (IWLLFLMGYNCISSVGALLNI) form a helical membrane-spanning segment. Topologically, residues 280–284 (LDVDA) are extracellular. The chain crosses the membrane as a helical span at residues 285 to 305 (GYCFLGIAAIIYSFSYGPLLF). The Cytoplasmic segment spans residues 306–691 (RTCGNDTNLL…GAEEFHYIDG (386 aa)). Residues 363 to 634 (FKFGQVIGEG…ANVPISNTYV (272 aa)) form the Protein kinase domain. Residues 369–377 (IGEGYFGEV) and Lys390 contribute to the ATP site. The Proton acceptor role is filled by Asp493.

Belongs to the protein kinase superfamily. TKL Tyr protein kinase family.

The protein localises to the membrane. The catalysed reaction is L-tyrosyl-[protein] + ATP = O-phospho-L-tyrosyl-[protein] + ADP + H(+). The sequence is that of Seven transmembrane domain-containing tyrosine-protein kinase 1 (7tmk1) from Dictyostelium discoideum (Social amoeba).